A 488-amino-acid polypeptide reads, in one-letter code: Teichuronic acid biosynthesis protein TuaE (488 aa).

The next 14 membrane-spanning stretches (helical) occupy residues 7 to 29 (AVHT…GAIH), 35 to 57 (MQMA…ATAF), 64 to 86 (FMAV…AIHL), 91 to 110 (LFLY…FGMV), 122 to 144 (LQVK…SLLW), 154 to 173 (YLAL…MYVQ), 180 to 202 (IVYA…NHIT), 222 to 244 (PTSV…FFYI), 257 to 274 (AIGL…FATG), 279 to 298 (LLGI…PPVL), 303 to 322 (IWLS…SKIY), 354 to 376 (NAWH…SYYL), 397 to 419 (ILAN…LIWV), and 459 to 476 (LFFH…VNVL).

Its subcellular location is the cell membrane. The protein operates within cell wall biogenesis; teichuronic acid biosynthesis. Its function is as follows. Might be involved in the polymerization of teichuronic acid repeating units after their translocation to the outer surface of the membrane. The chain is Teichuronic acid biosynthesis protein TuaE (tuaE) from Bacillus subtilis (strain 168).